Reading from the N-terminus, the 284-residue chain is Phospholipid phosphatase 1 (284 aa).

At 1–6 (MFDKTR) the chain is on the cytoplasmic side. The short motif at 5–7 (TRL) is the PDZ-binding; involved in localization to the apical cell membrane element. The chain crosses the membrane as a helical span at residues 7–27 (LPYVALDVLCVLLAGLPFAIL). The Extracellular portion of the chain corresponds to 28–53 (TSRHTPFQRGVFCNDESIKYPYKEDT). Residues 54 to 74 (IPYALLGGIIIPFSIIVIILG) traverse the membrane as a helical segment. The Cytoplasmic segment spans residues 75–94 (ETLSVYCNLLHSNSFIRNNY). A helical membrane pass occupies residues 95–115 (IATIYKAIGTFLFGAAASQSL). The Extracellular portion of the chain corresponds to 116–164 (TDIAKYSIGRLRPHFLDVCDPDWSKINCSDGYIEYYICRGNAERVKEGR). Residues 120 to 128 (KYSIGRLRP) are phosphatase sequence motif I. N-linked (GlcNAc...) asparagine glycosylation occurs at N142. Residues 165 to 185 (LSFYSGHSSFSMYCMLFVALY) traverse the membrane as a helical segment. The phosphatase sequence motif II stretch occupies residues 168 to 171 (YSGH). H171 (proton donors) is an active-site residue. At 186–199 (LQARMKGDWARLLR) the chain is on the cytoplasmic side. A helical transmembrane segment spans residues 200 to 220 (PTLQFGLVAVSIYVGLSRVSD). A phosphatase sequence motif III region spans residues 216 to 227 (SRVSDYKHHWSD). The Extracellular portion of the chain corresponds to 221–229 (YKHHWSDVL). Catalysis depends on H223, which acts as the Nucleophile. The helical transmembrane segment at 230-250 (TGLIQGALVAILVAVYVSDFF) threads the bilayer. The Cytoplasmic segment spans residues 251 to 284 (KERTSFKERKEEDSHTTLHETPTTGNHYPSNHQP). The disordered stretch occupies residues 260 to 284 (KEEDSHTTLHETPTTGNHYPSNHQP). Positions 269–284 (HETPTTGNHYPSNHQP) are enriched in polar residues.

The protein belongs to the PA-phosphatase related phosphoesterase family. As to quaternary structure, forms functional homodimers and homooligomers that are not required for substrate recognition and catalytic activity. Can also form heterooligomers with PLPP2 and PLPP3. Post-translationally, N-glycosylated. N-linked sugars are of the complex type. N-glycosylation is not required for the phosphatase activity. Widely expressed with highest expression found in prostate. Found to be down-regulated in colon adenocarcinomas. In terms of tissue distribution, predominant in kidney, lung, placenta and liver. As to expression, predominant in heart and pancreas.

It is found in the cell membrane. The protein localises to the apical cell membrane. The protein resides in the membrane raft. Its subcellular location is the membrane. It localises to the caveola. It carries out the reaction a 1,2-diacyl-sn-glycero-3-phosphate + H2O = a 1,2-diacyl-sn-glycerol + phosphate. It catalyses the reaction 1,2-dihexadecanoyl-sn-glycero-3-phosphate + H2O = 1,2-dihexadecanoyl-sn-glycerol + phosphate. The enzyme catalyses 1,2-di-(9Z-octadecenoyl)-sn-glycero-3-phosphate + H2O = 1,2-di-(9Z-octadecenoyl)-sn-glycerol + phosphate. The catalysed reaction is a monoacyl-sn-glycero-3-phosphate + H2O = a monoacylglycerol + phosphate. It carries out the reaction (9Z)-octadecenoyl-sn-glycero-3-phosphate + H2O = (9Z-octadecenoyl)-glycerol + phosphate. It catalyses the reaction a 1-acyl-sn-glycero-3-phosphate + H2O = a 1-acyl-sn-glycerol + phosphate. The enzyme catalyses 1-(9Z-octadecenoyl)-sn-glycero-3-phosphate + H2O = 1-(9Z-octadecenoyl)-sn-glycerol + phosphate. The catalysed reaction is a 1,2-diacyl-sn-glycerol 3-diphosphate + H2O = a 1,2-diacyl-sn-glycero-3-phosphate + phosphate + H(+). It carries out the reaction sphing-4-enine 1-phosphate + H2O = sphing-4-enine + phosphate. It catalyses the reaction an N-acylsphing-4-enine 1-phosphate + H2O = an N-acylsphing-4-enine + phosphate. The enzyme catalyses N-(octanoyl)-sphing-4-enine-1-phosphate + H2O = N-octanoylsphing-4-enine + phosphate. The catalysed reaction is N-(9Z-octadecenoyl)-ethanolamine phosphate + H2O = N-(9Z-octadecenoyl) ethanolamine + phosphate. It carries out the reaction 1-hexadecanoyl-2-(9Z-octadecenoyl)-sn-glycero-3-phosphate + H2O = 1-hexadecanoyl-2-(9Z-octadecenoyl)-sn-glycerol + phosphate. Its pathway is lipid metabolism; phospholipid metabolism. Its activity is regulated as follows. Magnesium-independent phospholipid phosphatase. Insensitive to N-ethylmaleimide. Inhibited by sphingosine, zinc ions and modestly by propanolol. Inhibited by vanadate. In terms of biological role, magnesium-independent phospholipid phosphatase of the plasma membrane that catalyzes the dephosphorylation of a variety of glycerolipid and sphingolipid phosphate esters including phosphatidate/PA, lysophosphatidate/LPA, diacylglycerol pyrophosphate/DGPP, sphingosine 1-phosphate/S1P and ceramide 1-phosphate/C1P. Also acts on N-oleoyl ethanolamine phosphate/N-(9Z-octadecenoyl)-ethanolamine phosphate, a potential physiological compound. Through its extracellular phosphatase activity allows both the hydrolysis and the cellular uptake of these bioactive lipid mediators from the milieu, regulating signal transduction in different cellular processes. It is for instance essential for the extracellular hydrolysis of S1P and subsequent conversion into intracellular S1P. Involved in the regulation of inflammation, platelets activation, cell proliferation and migration among other processes. May also have an intracellular activity to regulate phospholipid-mediated signaling pathways. In Homo sapiens (Human), this protein is Phospholipid phosphatase 1.